Reading from the N-terminus, the 198-residue chain is Recombination protein RecR (198 aa).

The segment at 57-72 (CSVCGHITDKDPCYIC) adopts a C4-type zinc-finger fold. The Toprim domain occupies 80–175 (SVICVVQESK…KVTRIAHGLP (96 aa)).

It belongs to the RecR family.

Its function is as follows. May play a role in DNA repair. It seems to be involved in an RecBC-independent recombinational process of DNA repair. It may act with RecF and RecO. The chain is Recombination protein RecR from Listeria monocytogenes serotype 4b (strain CLIP80459).